Reading from the N-terminus, the 383-residue chain is Cytochrome b (383 aa).

Helical transmembrane passes span 34–54, 78–99, 114–134, and 179–199; these read FGSL…FLMM, WLIR…FLHI, WNVG…GYVL, and FTAL…THLI. Heme b is bound by residues His84 and His98. The heme b site is built by His183 and His197. His202 contributes to the a ubiquinone binding site. The next 4 membrane-spanning stretches (helical) occupy residues 227 to 247, 289 to 309, 321 to 341, and 348 to 368; these read MKDV…ALYL, LGGV…PFLH, LSQL…WIGG, and YILL…ILMP.

This sequence belongs to the cytochrome b family. In terms of assembly, the cytochrome bc1 complex contains 3 respiratory subunits (MT-CYB, CYC1 and UQCRFS1), 2 core proteins (UQCRC1 and UQCRC2) and probably 6 low-molecular weight proteins. Requires heme b as cofactor.

It localises to the mitochondrion inner membrane. Its function is as follows. Component of the ubiquinol-cytochrome c reductase complex (complex III or cytochrome b-c1 complex) that is part of the mitochondrial respiratory chain. The b-c1 complex mediates electron transfer from ubiquinol to cytochrome c. Contributes to the generation of a proton gradient across the mitochondrial membrane that is then used for ATP synthesis. In Caiman crocodilus (Spectacled caiman), this protein is Cytochrome b (MT-CYB).